The following is a 202-amino-acid chain: Holliday junction branch migration complex subunit RuvA (202 aa).

A domain I region spans residues 1–63 (MIAFLSGRVV…EDSLTLFGFA (63 aa)). The segment at 64–142 (DDDERDTFER…EPGGDTAATP (79 aa)) is domain II. The tract at residues 143–152 (EQSAAAAPRN) is flexible linker. Residues 152–202 (NWRAQVVSGLVNLGWSTREAEAAADAVAAEAGEQPDVAALLRSALRRLSRA) are domain III.

This sequence belongs to the RuvA family. As to quaternary structure, homotetramer. Forms an RuvA(8)-RuvB(12)-Holliday junction (HJ) complex. HJ DNA is sandwiched between 2 RuvA tetramers; dsDNA enters through RuvA and exits via RuvB. An RuvB hexamer assembles on each DNA strand where it exits the tetramer. Each RuvB hexamer is contacted by two RuvA subunits (via domain III) on 2 adjacent RuvB subunits; this complex drives branch migration. In the full resolvosome a probable DNA-RuvA(4)-RuvB(12)-RuvC(2) complex forms which resolves the HJ.

The protein localises to the cytoplasm. In terms of biological role, the RuvA-RuvB-RuvC complex processes Holliday junction (HJ) DNA during genetic recombination and DNA repair, while the RuvA-RuvB complex plays an important role in the rescue of blocked DNA replication forks via replication fork reversal (RFR). RuvA specifically binds to HJ cruciform DNA, conferring on it an open structure. The RuvB hexamer acts as an ATP-dependent pump, pulling dsDNA into and through the RuvAB complex. HJ branch migration allows RuvC to scan DNA until it finds its consensus sequence, where it cleaves and resolves the cruciform DNA. This chain is Holliday junction branch migration complex subunit RuvA, found in Thermobifida fusca (strain YX).